Reading from the N-terminus, the 356-residue chain is Protein HEXIM1 (356 aa).

2 stretches are compositionally biased toward basic and acidic residues: residues Met1–His11 and Val24–Trp47. The segment at Met1 to Lys162 is disordered. The span at Gln48–Arg58 shows a compositional bias: polar residues. Over residues Ser84–Asn93 the composition is skewed to basic and acidic residues. Phosphoserine is present on residues Ser98 and Ser103. Residues Leu145–Lys162 show a composition bias toward basic residues. Residues Lys147 to Lys174 are basic region; mediates nuclear localization and interaction with 7SK snRNA and NR3C1. Residues Pro199–Thr202 are interaction with P-TEFb. Residues Met207–Gly247 form an autoinhibitory acidic region; in absence of 7SK snRNA interacts with the basic region preventing interaction with P-TEFb and modulating subcellular localization region. The segment at His210–Phe259 is disordered. Ser230 is modified (phosphoserine). Thr233 bears the Phosphothreonine mark. Positions Thr233–Gly248 are enriched in acidic residues. Residues Ser234, Ser249, and Ser257 each carry the phosphoserine modification. Positions Ser280–Gln346 form a coiled coil. Residues Glu283 to Arg311 are mediates interaction with CCNT1. The required for inhibition of ESR1-dependent transcription stretch occupies residues Leu307–Ser352.

Belongs to the HEXIM family. In terms of assembly, homooligomer and heterooligomer with HEXIM2; probably dimeric. Core component of the 7SK RNP complex, at least composed of 7SK RNA, LARP7, MEPCE, HEXIM1 (or HEXIM2) and P-TEFb (composed of CDK9 and CCNT1/cyclin-T1). Interacts with the N-CoR complex through NCOR1. Interacts with ESR1 and NR3C1. May interact with NF-kappa-B through RELA. Interacts with CCNT2; mediates formation of a tripartite complex with KPNA2. Part of the HDP-RNP complex composed of at least HEXIM1, PRKDC, XRCC5, XRCC6, paraspeckle proteins (SFPQ, NONO, PSPC1, RBM14, and MATR3) and NEAT1 non-coding RNA. As to expression, widely expressed with higher expression in heart, skeletal muscle and brain (at protein level).

The protein localises to the nucleus. Its subcellular location is the cytoplasm. Transcriptional regulator which functions as a general RNA polymerase II transcription inhibitor. Core component of the 7SK RNP complex: in cooperation with 7SK snRNA sequesters P-TEFb in a large inactive 7SK snRNP complex preventing RNA polymerase II phosphorylation and subsequent transcriptional elongation. May also regulate NF-kappa-B, ESR1, NR3C1 and CIITA-dependent transcriptional activity. Plays a role in the regulation of DNA virus-mediated innate immune response by assembling into the HDP-RNP complex, a complex that serves as a platform for IRF3 phosphorylation and subsequent innate immune response activation through the cGAS-STING pathway. The polypeptide is Protein HEXIM1 (Hexim1) (Mus musculus (Mouse)).